A 503-amino-acid polypeptide reads, in one-letter code: Zinc-regulated transporter 3 (503 aa).

3 consecutive transmembrane segments (helical) span residues 8–28 (LLFS…VPLL), 42–62 (LVNY…LYML), and 75–95 (FPGL…VHAF). Residues 112 to 171 (GSHIHSKSHSHSHSHSHADSHSNFSNDHDLENAPSEHGYATSSSSVSENDPLITKDSDRP) are disordered. Over residues 115–126 (IHSKSHSHSHSH) the composition is skewed to basic residues. The span at 127–142 (SHADSHSNFSNDHDLE) shows a compositional bias: basic and acidic residues. Ser-178 and Ser-188 each carry phosphoserine. Disordered regions lie at residues 221–244 (QSER…DKDH) and 274–295 (HHSS…FSSP). A compositionally biased stretch (polar residues) spans 280–295 (PENYGSNQLSHSFSSP). 5 consecutive transmembrane segments (helical) span residues 336–356 (IGMQ…FIIF), 371–391 (IFLS…LPFY), 398–418 (WVAI…GALI), 438–458 (LLSV…QTGI), and 482–502 (GTTC…SALF).

This sequence belongs to the ZIP transporter (TC 2.A.5) family.

The protein resides in the vacuole membrane. Functionally, transports zinc from storage in the vacuole to the cytoplasm. The sequence is that of Zinc-regulated transporter 3 (ZRT3) from Saccharomyces cerevisiae (strain ATCC 204508 / S288c) (Baker's yeast).